The following is a 209-amino-acid chain: GELVGGEVKVGHNLEAILKGLDVDVYSVPSFIKLYDQVTAGIFLNNRTKRYWFDKNAESNCFMLYARDLLITWSQDKRYWRWNPFQEHGNTLEVAELIDVCWLNIVGNIETSVLSPGISYEAAFEVMLTNSASGWRIPVDVKLKMPDGSEQESQVNLQDKPRGVWFFISVGHFKISVGETIGNIEFSIVQHQEAKRGLLVKGLVIQPKQ.

As to quaternary structure, homodimer; non-covalently linked.

Binds chito-oligosaccherides. Has hemagglutinating activity towards rabbit erythrocytes. The polypeptide is Lectin (Luffa acutangula (Ridged gourd)).